The chain runs to 142 residues: Lutropin subunit beta (142 aa).

Residues 1 to 21 form the signal peptide; sequence MEMLQGLLLLWLLLNVGGVWT. Disulfide bonds link cysteine 30–cysteine 78, cysteine 44–cysteine 93, cysteine 47–cysteine 131, cysteine 55–cysteine 109, cysteine 59–cysteine 111, and cysteine 114–cysteine 121. Asparagine 34 is a glycosylation site (N-linked (GlcNAc...) asparagine).

The protein belongs to the glycoprotein hormones subunit beta family. In terms of assembly, heterodimer of a common alpha chain and a unique beta chain which confers biological specificity to thyrotropin, lutropin, follitropin and gonadotropin.

It is found in the secreted. Functionally, promotes spermatogenesis and ovulation by stimulating the testes and ovaries to synthesize steroids. The polypeptide is Lutropin subunit beta (LHB) (Panthera tigris altaica (Siberian tiger)).